The primary structure comprises 453 residues: Cysteine--tRNA ligase (453 aa).

Residue cysteine 30 coordinates Zn(2+). A 'HIGH' region motif is present at residues 32–42 (PTVYDRAHLGN). Zn(2+) contacts are provided by cysteine 212, histidine 237, and glutamate 241. Residues 268–272 (KMSKS) carry the 'KMSKS' region motif. Lysine 271 serves as a coordination point for ATP.

The protein belongs to the class-I aminoacyl-tRNA synthetase family. As to quaternary structure, monomer. Zn(2+) serves as cofactor.

Its subcellular location is the cytoplasm. The enzyme catalyses tRNA(Cys) + L-cysteine + ATP = L-cysteinyl-tRNA(Cys) + AMP + diphosphate. The polypeptide is Cysteine--tRNA ligase (Jannaschia sp. (strain CCS1)).